The sequence spans 234 residues: Protein UL20 homolog (234 aa).

The next 4 membrane-spanning stretches (helical) occupy residues 82 to 102 (VVLF…IFLF), 112 to 132 (FLIL…LEMY), 153 to 173 (IGAL…NMIF), and 191 to 211 (TSGF…ITSI).

The protein belongs to the alphaherpesvirinae UL20 family. Interacts with gK (via N-terminus); this interaction plays a role in the coordinate transport of UL20 and gK to the trans-Golgi network (TGN), and is required for their cell surface expression. Interacts with gB.

The protein localises to the virion. The protein resides in the host cell membrane. It localises to the host endosome membrane. It is found in the host Golgi apparatus membrane. Its subcellular location is the host nucleus membrane. Its function is as follows. Plays an essential role in egress of virus particles from the nucleus, cytoplasmic envelopment and virus-induced cell fusion. Forms a functional protein complex with gK and this interaction is absolutely essential for their coordinate intracellular transport, gK glycosylation, expression on host cell surface, and function. Together, they modulate gB-mediated virus-induced cell fusion and virion egress and therefore actively participate in these processes. In Gallid herpesvirus 2 (strain Chicken/Md5/ATCC VR-987) (GaHV-2), this protein is Protein UL20 homolog (MDV032).